A 204-amino-acid polypeptide reads, in one-letter code: Probable nicotinate-nucleotide adenylyltransferase (204 aa).

Belongs to the NadD family.

The enzyme catalyses nicotinate beta-D-ribonucleotide + ATP + H(+) = deamido-NAD(+) + diphosphate. Its pathway is cofactor biosynthesis; NAD(+) biosynthesis; deamido-NAD(+) from nicotinate D-ribonucleotide: step 1/1. Its function is as follows. Catalyzes the reversible adenylation of nicotinate mononucleotide (NaMN) to nicotinic acid adenine dinucleotide (NaAD). This Dehalococcoides mccartyi (strain ATCC BAA-2266 / KCTC 15142 / 195) (Dehalococcoides ethenogenes (strain 195)) protein is Probable nicotinate-nucleotide adenylyltransferase.